The chain runs to 229 residues: Cytidylate kinase (229 aa).

Residue 10–18 (GFSSCGKST) coordinates ATP.

Belongs to the cytidylate kinase family. Type 1 subfamily.

The protein localises to the cytoplasm. It catalyses the reaction CMP + ATP = CDP + ADP. It carries out the reaction dCMP + ATP = dCDP + ADP. This is Cytidylate kinase from Bacteroides fragilis (strain ATCC 25285 / DSM 2151 / CCUG 4856 / JCM 11019 / LMG 10263 / NCTC 9343 / Onslow / VPI 2553 / EN-2).